Here is a 123-residue protein sequence, read N- to C-terminus: Holo-[acyl-carrier-protein] synthase (123 aa).

Mg(2+)-binding residues include Asp8 and Glu60.

Belongs to the P-Pant transferase superfamily. AcpS family. Mg(2+) is required as a cofactor.

The protein resides in the cytoplasm. It catalyses the reaction apo-[ACP] + CoA = holo-[ACP] + adenosine 3',5'-bisphosphate + H(+). Functionally, transfers the 4'-phosphopantetheine moiety from coenzyme A to a Ser of acyl-carrier-protein. This Ehrlichia ruminantium (strain Welgevonden) protein is Holo-[acyl-carrier-protein] synthase.